A 145-amino-acid polypeptide reads, in one-letter code: Small ribosomal subunit protein eS19 (145 aa).

The protein belongs to the eukaryotic ribosomal protein eS19 family. In terms of assembly, part of the 30S ribosomal subunit.

Functionally, may be involved in maturation of the 30S ribosomal subunit. This chain is Small ribosomal subunit protein eS19, found in Methanothermobacter thermautotrophicus (strain ATCC 29096 / DSM 1053 / JCM 10044 / NBRC 100330 / Delta H) (Methanobacterium thermoautotrophicum).